The chain runs to 341 residues: Ribosomal RNA small subunit methyltransferase C (341 aa).

It belongs to the methyltransferase superfamily. RsmC family. As to quaternary structure, monomer.

Its subcellular location is the cytoplasm. It carries out the reaction guanosine(1207) in 16S rRNA + S-adenosyl-L-methionine = N(2)-methylguanosine(1207) in 16S rRNA + S-adenosyl-L-homocysteine + H(+). In terms of biological role, specifically methylates the guanine in position 1207 of 16S rRNA in the 30S particle. The sequence is that of Ribosomal RNA small subunit methyltransferase C from Vibrio parahaemolyticus serotype O3:K6 (strain RIMD 2210633).